The sequence spans 224 residues: Na(+)-translocating NADH-quinone reductase subunit D (224 aa).

5 helical membrane-spanning segments follow: residues 43–63 (TVMA…ISMI), 67–87 (IPSS…VIVV), 104–124 (VFVG…AFAM), 132–152 (FFDG…LGFV), and 179–199 (NGLL…IWAL).

It belongs to the NqrDE/RnfAE family. As to quaternary structure, composed of six subunits; NqrA, NqrB, NqrC, NqrD, NqrE and NqrF.

The protein localises to the cell inner membrane. It catalyses the reaction a ubiquinone + n Na(+)(in) + NADH + H(+) = a ubiquinol + n Na(+)(out) + NAD(+). Functionally, NQR complex catalyzes the reduction of ubiquinone-1 to ubiquinol by two successive reactions, coupled with the transport of Na(+) ions from the cytoplasm to the periplasm. NqrA to NqrE are probably involved in the second step, the conversion of ubisemiquinone to ubiquinol. This Pseudomonas aeruginosa (strain LESB58) protein is Na(+)-translocating NADH-quinone reductase subunit D.